The primary structure comprises 325 residues: DNA-directed RNA polymerase subunit alpha (325 aa).

Residues 1-239 (MQQFLRYNIN…DHLKPLIDIN (239 aa)) are alpha N-terminal domain (alpha-NTD). An alpha C-terminal domain (alpha-CTD) region spans residues 255 to 325 (EKNKKLSIPI…ELYDLKLKNN (71 aa)).

It belongs to the RNA polymerase alpha chain family. Homodimer. The RNAP catalytic core consists of 2 alpha, 1 beta, 1 beta' and 1 omega subunit. When a sigma factor is associated with the core the holoenzyme is formed, which can initiate transcription.

The catalysed reaction is RNA(n) + a ribonucleoside 5'-triphosphate = RNA(n+1) + diphosphate. Functionally, DNA-dependent RNA polymerase catalyzes the transcription of DNA into RNA using the four ribonucleoside triphosphates as substrates. The chain is DNA-directed RNA polymerase subunit alpha from Mycoplasmoides gallisepticum (strain R(low / passage 15 / clone 2)) (Mycoplasma gallisepticum).